The chain runs to 208 residues: MRPLTARQTEVLELIKTTMQETGMPPTRAEIARQLGFRSANAAEEHLKALARKGVIEILPGTSRGIKLNIPLDNEAEEEEGLPLIGRVAAGEPILAQEHVESHYKVDPALFQPQADFLLRVNGMSMKDIGILDGDLLAVHRTTDVHNGQVVVARVDEDVTVKRLEKRGREVLLHAENEEFSPIKVDLANEPFAIEGIAVGVIRNADWM.

Residues 28 to 48 (RAEIARQLGFRSANAAEEHLK) constitute a DNA-binding region (H-T-H motif). Residues serine 125 and lysine 162 each act as for autocatalytic cleavage activity in the active site.

Belongs to the peptidase S24 family. Homodimer.

The enzyme catalyses Hydrolysis of Ala-|-Gly bond in repressor LexA.. Its function is as follows. Represses a number of genes involved in the response to DNA damage (SOS response), including recA and lexA. In the presence of single-stranded DNA, RecA interacts with LexA causing an autocatalytic cleavage which disrupts the DNA-binding part of LexA, leading to derepression of the SOS regulon and eventually DNA repair. In Alteromonas mediterranea (strain DSM 17117 / CIP 110805 / LMG 28347 / Deep ecotype), this protein is LexA repressor.